The primary structure comprises 280 residues: Hematopoietically-expressed homeobox protein HHEX homolog (280 aa).

Disordered regions lie at residues 1–35 (MSTL…GLAP) and 221–280 (RRVK…EKEA). The segment at residues 165–224 (RKGGQVRFSNDQTMELEKKFESQKYLSPPERKKLAKLLQLSERQVKTWFQNRRAKWRRVK) is a DNA-binding region (homeobox). Residues 232–252 (GEGDENSHEKPRDLDRDDFSR) show a composition bias toward basic and acidic residues.

The protein resides in the nucleus. Functionally, transcription factor that may play a central role in activating or maintaining gene expression in the vegetal pole. Part of a gene regulatory circuit with Erg and Tgif that operates early in mesoderm development. This is Hematopoietically-expressed homeobox protein HHEX homolog from Patiria miniata (Bat star).